A 63-amino-acid chain; its full sequence is Cytochrome c oxidase subunit 5A, mitochondrial (63 aa).

This sequence belongs to the cytochrome c oxidase subunit 5A family. In terms of assembly, component of the cytochrome c oxidase (complex IV, CIV), a multisubunit enzyme composed of a catalytic core of 3 subunits and several supernumerary subunits. The complex exists as a monomer or a dimer and forms supercomplexes (SCs) in the inner mitochondrial membrane with ubiquinol-cytochrome c oxidoreductase (cytochrome b-c1 complex, complex III, CIII).

Its subcellular location is the mitochondrion inner membrane. The protein operates within energy metabolism; oxidative phosphorylation. Its function is as follows. Component of the cytochrome c oxidase, the last enzyme in the mitochondrial electron transport chain which drives oxidative phosphorylation. The respiratory chain contains 3 multisubunit complexes succinate dehydrogenase (complex II, CII), ubiquinol-cytochrome c oxidoreductase (cytochrome b-c1 complex, complex III, CIII) and cytochrome c oxidase (complex IV, CIV), that cooperate to transfer electrons derived from NADH and succinate to molecular oxygen, creating an electrochemical gradient over the inner membrane that drives transmembrane transport and the ATP synthase. Cytochrome c oxidase is the component of the respiratory chain that catalyzes the reduction of oxygen to water. Electrons originating from reduced cytochrome c in the intermembrane space (IMS) are transferred via the dinuclear copper A center (CU(A)) of subunit 2 and heme A of subunit 1 to the active site in subunit 1, a binuclear center (BNC) formed by heme A3 and copper B (CU(B)). The BNC reduces molecular oxygen to 2 water molecules using 4 electrons from cytochrome c in the IMS and 4 protons from the mitochondrial matrix. The protein is Cytochrome c oxidase subunit 5A, mitochondrial (COVA) of Manduca sexta (Tobacco hawkmoth).